The sequence spans 117 residues: Large ribosomal subunit protein uL18 (117 aa).

This sequence belongs to the universal ribosomal protein uL18 family. In terms of assembly, part of the 50S ribosomal subunit; part of the 5S rRNA/L5/L18/L25 subcomplex. Contacts the 5S and 23S rRNAs.

Functionally, this is one of the proteins that bind and probably mediate the attachment of the 5S RNA into the large ribosomal subunit, where it forms part of the central protuberance. The chain is Large ribosomal subunit protein uL18 from Sodalis glossinidius (strain morsitans).